A 320-amino-acid chain; its full sequence is Cytochrome f (320 aa).

An N-terminal signal peptide occupies residues 1 to 35; that stretch reads MENKNTFSWVKEQMTRSISVSIMIYVITQTSISNA. The heme site is built by tyrosine 36, cysteine 56, cysteine 59, and histidine 60. A helical transmembrane segment spans residues 286–306; sequence VQGLLFFFASVILAQVFLVLK.

This sequence belongs to the cytochrome f family. In terms of assembly, the 4 large subunits of the cytochrome b6-f complex are cytochrome b6, subunit IV (17 kDa polypeptide, petD), cytochrome f and the Rieske protein, while the 4 small subunits are PetG, PetL, PetM and PetN. The complex functions as a dimer. Heme serves as cofactor.

The protein resides in the plastid. It localises to the chloroplast thylakoid membrane. In terms of biological role, component of the cytochrome b6-f complex, which mediates electron transfer between photosystem II (PSII) and photosystem I (PSI), cyclic electron flow around PSI, and state transitions. The sequence is that of Cytochrome f from Lolium perenne (Perennial ryegrass).